A 473-amino-acid polypeptide reads, in one-letter code: Vasculin (473 aa).

3 disordered regions span residues 1 to 25 (MAQH…SSLN), 46 to 149 (RHNS…REPN), and 191 to 342 (VGNL…QERD). A Phosphoserine modification is found at Ser-49. Arg-87 bears the Omega-N-methylarginine mark. A compositionally biased stretch (basic and acidic residues) spans 119–133 (ETGRKEDKRERKQFE). Composition is skewed to polar residues over residues 194-204 (LPSQPVKNGTG) and 251-286 (AFKS…QQPR). Phosphoserine occurs at positions 274, 276, 322, and 381. The segment covering 293–329 (MRTDKKSEFLKALKRDRVEEEHEDESRAGSEKDDDSF) has biased composition (basic and acidic residues). Residues 444–473 (GPWKNSTFKPTTENDDTETSSSDTSDDDDV) are disordered. A compositionally biased stretch (acidic residues) spans 456 to 473 (ENDDTETSSSDTSDDDDV).

Belongs to the vasculin family. Interacts with GTF2B, GTF2F2, RNA polymerase II and TBP. Widely expressed. Some isoforms may be specifically expressed in veins and arteries (at protein level). Isoform 4 is widely expressed. Isoform 1, isoform 2 and isoform 3 may be specifically expressed in vascular smooth muscle cells.

The protein localises to the nucleus. It localises to the cytoplasm. In terms of biological role, functions as a GC-rich promoter-specific transactivating transcription factor. In Homo sapiens (Human), this protein is Vasculin (GPBP1).